Reading from the N-terminus, the 604-residue chain is MIRQCLSRRGAYSRYRLAARGVELAEPFHHQSSRPQGRRNWSSSPRCSLDIRTDTPRSRSEYVPLRKQLKEEAKAKRAAKRKGSAPPAKHDDWELTVGIEIHAQLDTDAKLFSRASAAIDDIPNSNVALFDIALPGSQPLFQPSTLIPALRAALAMNCDIQRVSRFDRKHYFYQDQPAGYQITQYYEPYAKNGSIWLQEHDGIAREDGEGVQIGIKQIQMEQDTAKSQELPSSTYLLDFNRVSRPLIEIITLPQIHSPATAAACVRKIQAILQSVGAVTTGMEMGGLRADVNVSVRKRSEEAGDHEYHGIVGLGQRTEIKNLSSFKAVEDAIIAERDRQIAVLEAGGTIEGETRGWTLGSTETRKLRGKEGEVDYRYMPDPDLGPVVIGEDVICDLQMKMPLLPDALFQMLVRNPKYKLSTADAKTMIELDDGQRLEYYQDVVDILIGLQTDLSADFSGGKAVGNWVLHELGGLLTKSSLPWDSGRVPAQSLAEIIDLLSRKEITSSSAKSLLAMVFDGDKRSVAQIVEDENLRFQSLSRGEYIALAEEVMRQNPKMVSEIREKGQLGKIGWFVGQIKRIGDANRVEAQKAEEILRELILKKNS.

The transit peptide at 1–48 directs the protein to the mitochondrion; the sequence is MIRQCLSRRGAYSRYRLAARGVELAEPFHHQSSRPQGRRNWSSSPRCS. The disordered stretch occupies residues 28–57; the sequence is FHHQSSRPQGRRNWSSSPRCSLDIRTDTPR. Positions 33–46 are enriched in polar residues; sequence SRPQGRRNWSSSPR.

The protein belongs to the GatB/GatE family. GatB subfamily. Subunit of the heterotrimeric GatCAB amidotransferase (AdT) complex, composed of A, B and C subunits.

The protein resides in the mitochondrion. It carries out the reaction L-glutamyl-tRNA(Gln) + L-glutamine + ATP + H2O = L-glutaminyl-tRNA(Gln) + L-glutamate + ADP + phosphate + H(+). Its function is as follows. Allows the formation of correctly charged Gln-tRNA(Gln) through the transamidation of misacylated Glu-tRNA(Gln) in the mitochondria. The reaction takes place in the presence of glutamine and ATP through an activated gamma-phospho-Glu-tRNA(Gln). The polypeptide is Glutamyl-tRNA(Gln) amidotransferase subunit B, mitochondrial (Ajellomyces dermatitidis (strain ER-3 / ATCC MYA-2586) (Blastomyces dermatitidis)).